Here is a 418-residue protein sequence, read N- to C-terminus: NADH-quinone oxidoreductase subunit D (418 aa).

This sequence belongs to the complex I 49 kDa subunit family. As to quaternary structure, NDH-1 is composed of 14 different subunits. Subunits NuoB, C, D, E, F, and G constitute the peripheral sector of the complex.

Its subcellular location is the cell inner membrane. The enzyme catalyses a quinone + NADH + 5 H(+)(in) = a quinol + NAD(+) + 4 H(+)(out). NDH-1 shuttles electrons from NADH, via FMN and iron-sulfur (Fe-S) centers, to quinones in the respiratory chain. The immediate electron acceptor for the enzyme in this species is believed to be ubiquinone. Couples the redox reaction to proton translocation (for every two electrons transferred, four hydrogen ions are translocated across the cytoplasmic membrane), and thus conserves the redox energy in a proton gradient. This chain is NADH-quinone oxidoreductase subunit D, found in Neisseria meningitidis serogroup B (strain ATCC BAA-335 / MC58).